The sequence spans 78 residues: Antitoxin VapB27 (78 aa).

A SpoVT-AbrB domain is found at 1-45; the sequence is MKAVVDAAGRIVVPKPLREALGLQPGSTVEISRYGAGLHLIPTGR.

Belongs to the VapB family. In terms of assembly, interacts with cognate toxin VapC27 and non-cognate toxins MazF6 and VapC40. Interaction with MazF6 and MazF9 partially neutralizes the toxins.

Antitoxin component of a type II toxin-antitoxin (TA) system. Cognate toxin is VapC27. Upon expression in E.coli partially counteracts the ribonuclease activity of non-cognate toxins MazF6 and MazF9. The protein is Antitoxin VapB27 (vapB27) of Mycobacterium tuberculosis (strain ATCC 25618 / H37Rv).